The primary structure comprises 262 residues: Adenosylcobinamide-GDP ribazoletransferase (262 aa).

6 helical membrane-spanning segments follow: residues 43–63 (YFGLVGLLVGLLSAIVFWLTQ), 66–86 (LPAGVSVLLSMVTGVLLTGGF), 120–140 (GALALMLVLMLKWQLLVELAL), 146–166 (AGSAMIVAHTVSRVVAASLIF), 191–211 (LFILIASGVLVLLVLKGIAAL), and 242–262 (AAQQICEIVCYFVLLVVGSIL).

The protein belongs to the CobS family. It depends on Mg(2+) as a cofactor.

It is found in the cell inner membrane. It catalyses the reaction alpha-ribazole + adenosylcob(III)inamide-GDP = adenosylcob(III)alamin + GMP + H(+). It carries out the reaction alpha-ribazole 5'-phosphate + adenosylcob(III)inamide-GDP = adenosylcob(III)alamin 5'-phosphate + GMP + H(+). It functions in the pathway cofactor biosynthesis; adenosylcobalamin biosynthesis; adenosylcobalamin from cob(II)yrinate a,c-diamide: step 7/7. Functionally, joins adenosylcobinamide-GDP and alpha-ribazole to generate adenosylcobalamin (Ado-cobalamin). Also synthesizes adenosylcobalamin 5'-phosphate from adenosylcobinamide-GDP and alpha-ribazole 5'-phosphate. The chain is Adenosylcobinamide-GDP ribazoletransferase from Shewanella sp. (strain ANA-3).